A 443-amino-acid polypeptide reads, in one-letter code: Exodeoxyribonuclease 7 large subunit (443 aa).

The protein belongs to the XseA family. Heterooligomer composed of large and small subunits.

The protein resides in the cytoplasm. The enzyme catalyses Exonucleolytic cleavage in either 5'- to 3'- or 3'- to 5'-direction to yield nucleoside 5'-phosphates.. Bidirectionally degrades single-stranded DNA into large acid-insoluble oligonucleotides, which are then degraded further into small acid-soluble oligonucleotides. This chain is Exodeoxyribonuclease 7 large subunit, found in Vibrio vulnificus (strain YJ016).